The following is a 642-amino-acid chain: MGKIESNERVILNVGGTRHETYRSTLKTLPGTRLALLASSEPQGDCLTAAGDKLQPLPPPLSPPPRPPPLSPVPSGCFEGGAGNCSSHGGNGGNGGSDHPGGGREFFFDRHPGVFAYVLNYYRTGKLHCPADVCGPLFEEELAFWGIDETDVEPCCWMTYRQHRDAEEALDIFETPDLIGGDPGDDEDLAAKRLGIEDAAGLGGPDGKSGRWRKLQPRMWALFEDPYSSRAARFIAFASLFFILVSITTFCLETHEAFNIVKNKTEPVINGTSPVLQYEIETDPALTYVEGVCVVWFTFEFLVRIVFSPNKLEFIKNLLNIIDFVAILPFYLEVGLSGLSSKAAKDVLGFLRVVRFVRILRIFKLTRHFVGLRVLGHTLRASTNEFLLLIIFLALGVLIFATMIYYAERVGAQPNDPSASEHTQFKNIPIGFWWAVVTMTTLGYGDMYPQTWSGMLVGALCALAGVLTIAMPVPVIVNNFGMYYSLAMAKQKLPRKRKKHIPPAPLASSPTFCKTELNMACNSTQSDTCLGKENRLLEHNRSVLSGDDSTGSEPPLSPPERLPIRRSSTRDKNRRGETCFLLTTGDYTCASDGGIRKGYEKSRSLNNIAGLAGNALRLSPVTSPYNSPCPLRRSRSPIPSIL.

At 1–233 the chain is on the cytoplasmic side; that stretch reads MGKIESNERV…EDPYSSRAAR (233 aa). A disordered region spans residues 45–98; it reads DCLTAAGDKLQPLPPPLSPPPRPPPLSPVPSGCFEGGAGNCSSHGGNGGNGGSD. The segment covering 56–72 has biased composition (pro residues); it reads PLPPPLSPPPRPPPLSP. Positions 78 to 98 are enriched in gly residues; it reads FEGGAGNCSSHGGNGGNGGSD. Residues histidine 128, cysteine 134, cysteine 155, and cysteine 156 each coordinate Zn(2+). A helical membrane pass occupies residues 234 to 254; it reads FIAFASLFFILVSITTFCLET. N-linked (GlcNAc...) asparagine glycans are attached at residues asparagine 263 and asparagine 270. The helical transmembrane segment at 287 to 307 threads the bilayer; the sequence is TYVEGVCVVWFTFEFLVRIVF. At 308-317 the chain is on the cytoplasmic side; the sequence is SPNKLEFIKN. The helical transmembrane segment at 318-338 threads the bilayer; that stretch reads LLNIIDFVAILPFYLEVGLSG. The chain crosses the membrane as a helical; Voltage-sensor span at residues 350-372; the sequence is FLRVVRFVRILRIFKLTRHFVGL. At 373–385 the chain is on the cytoplasmic side; the sequence is RVLGHTLRASTNE. Residues 386-406 form a helical membrane-spanning segment; the sequence is FLLLIIFLALGVLIFATMIYY. K(+) is bound by residues threonine 441, leucine 442, glycine 443, and tyrosine 444. The short motif at 441-446 is the Selectivity filter element; that stretch reads TLGYGD. Residues 457–477 form a helical membrane-spanning segment; that stretch reads VGALCALAGVLTIAMPVPVIV. The Cytoplasmic segment spans residues 478–642; it reads NNFGMYYSLA…RSRSPIPSIL (165 aa). Residues 542–576 form a disordered region; that stretch reads SVLSGDDSTGSEPPLSPPERLPIRRSSTRDKNRRG. Serine 604 is modified (phosphoserine).

This sequence belongs to the potassium channel family. C (Shaw) (TC 1.A.1.2) subfamily. Kv3.2/KCNC2 sub-subfamily. In terms of assembly, homotetramer and heterotetramer with other channel-forming alpha subunits, such as KCNC1. Interacts with KCNC1. Homotetramer or heterotetramer channel activity is regulated by association with modulating ancillary subunits such as KCNE1, KCNE2 and KCNE3, creating a functionally diverse range of channel complexes. Interacts with KCNE1, KCNE2 and KCNE3. Phosphorylated by PKA in cortical synaptosomes. cAMP-dependent phosphorylation inhibits channel activity. Histamine H2 receptor- and PKA-induced phosphorylation extends action potential spike duration, reduces action potential spike amplitude, sustains maximum firing frequency in hippocampal interneurons; also reduces the incidence of high-frequency oscillations in hippocampal CA3 pyramidal cell layers. Weakly expressed in the brain at postnatal age day 7 (P7) and increased at P60. Not detectable in newborn hippocampus. Expressed weakly at P7 in the early developing hippocampus, increasing progressively and reaching a plateau of expression at P14 that is maintained throughout P51. Expressed in paravalbumin- and somatostain-containing inhibitory interneurons of the hippocampus; in the CA1/CA3 stratum oriens-alveus and stratum pyramidale and in cells within the hilus and subgranular layer of the dentate gyrus (DG). Strongly expressed in parvalbumin (PV)-containing fast-spiking GABAergic inhibitor interneurons in deep cortical layers V and VI. Also expressed in non-fast-spiking calbindin (CB)- and/or somatostatin (SOM)-containing interneurons in deep cortical layers V and VI. Expressed in starburst amacrine cells of the retina in the inner nuclear layer (INL) and ganglion cell layer (GCL). Expressed in the suprachiasmatic nucleus (SCN) (at protein level). Expressed in the early developing brain, increasing progressively until P14.

It is found in the cell membrane. It localises to the membrane. The protein resides in the perikaryon. Its subcellular location is the cell projection. The protein localises to the axon. It is found in the dendrite. It localises to the postsynaptic cell membrane. The protein resides in the presynaptic cell membrane. Its subcellular location is the synapse. The protein localises to the synaptosome. It is found in the apical cell membrane. It localises to the basolateral cell membrane. It carries out the reaction K(+)(in) = K(+)(out). Inhibited by millimolar levels of tetraethylammonium (TEA). Contrary to other channels, inhibited only by millimolar levels of 4-aminopyridine (4-AP). Inhibited by Stichodactyla helianthus peptide ShK. In terms of biological role, voltage-gated potassium channel that mediates transmembrane potassium transport in excitable membranes, primarily in the brain. Contributes to the regulation of the fast action potential repolarization and in sustained high-frequency firing in neurons of the central nervous system. Homotetramer channels mediate delayed-rectifier voltage-dependent potassium currents that activate rapidly at high-threshold voltages and inactivate slowly. Forms tetrameric channels through which potassium ions pass in accordance with their electrochemical gradient. The channel alternates between opened and closed conformations in response to the voltage difference across the membrane. Can form functional homotetrameric and heterotetrameric channels that contain variable proportions of KCNC1, and possibly other family members as well; channel properties depend on the type of alpha subunits that are part of the channel. Channel properties may be modulated by either the association with ancillary subunits, such as KCNE1, KCNE2 and KCNE3 or indirectly by nitric oxide (NO) through a cGMP- and PKG-mediated signaling cascade, slowing channel activation and deactivation of delayed rectifier potassium channels. Contributes to fire sustained trains of very brief action potentials at high frequency in thalamocortical and suprachiasmatic nucleus (SCN) neurons, in hippocampal and neocortical interneurons and in retinal ganglion cells. Sustained maximal action potential firing frequency in inhibitory hippocampal interneurons is negatively modulated by histamine H2 receptor activation in a cAMP- and protein kinase (PKA) phosphorylation-dependent manner. Plays a role in maintaining the fidelity of synaptic transmission in neocortical GABAergic interneurons by generating action potential (AP) repolarization at nerve terminals, thus reducing spike-evoked calcium influx and GABA neurotransmitter release. Required for long-range synchronization of gamma oscillations over distance in the neocortex. Contributes to the modulation of the circadian rhythm of spontaneous action potential firing in suprachiasmatic nucleus (SCN) neurons in a light-dependent manner. This chain is Voltage-gated potassium channel KCNC2, found in Mus musculus (Mouse).